The sequence spans 365 residues: 2-aminoethylphosphonate--pyruvate transaminase (365 aa).

N6-(pyridoxal phosphate)lysine is present on Lys-194.

Belongs to the class-V pyridoxal-phosphate-dependent aminotransferase family. PhnW subfamily. In terms of assembly, homodimer. Pyridoxal 5'-phosphate is required as a cofactor.

The catalysed reaction is (2-aminoethyl)phosphonate + pyruvate = phosphonoacetaldehyde + L-alanine. Its function is as follows. Involved in phosphonate degradation. This is 2-aminoethylphosphonate--pyruvate transaminase from Bacillus cereus (strain ZK / E33L).